A 149-amino-acid polypeptide reads, in one-letter code: Glycine cleavage system H protein (149 aa).

The Lipoyl-binding domain occupies 23–104 (LIWVGISNHA…PYGIWLFKIN (82 aa)). Lys-64 bears the N6-lipoyllysine mark.

The protein belongs to the GcvH family. In terms of assembly, the glycine cleavage system is composed of four proteins: P, T, L and H. The cofactor is (R)-lipoate.

Functionally, the glycine cleavage system catalyzes the degradation of glycine. The H protein shuttles the methylamine group of glycine from the P protein to the T protein. This Polynucleobacter necessarius subsp. necessarius (strain STIR1) protein is Glycine cleavage system H protein.